The primary structure comprises 375 residues: Histidine biosynthesis bifunctional protein HisB (375 aa).

The segment at 1–168 (MTPILFVDRD…GIAHELADAP (168 aa)) is histidinol-phosphatase. Asp8 (nucleophile) is an active-site residue. Mg(2+)-binding residues include Asp8, Asp10, and Asp128. Asp10 (proton donor) is an active-site residue. The interval 169–375 (RRAVVQRNTK…TALPSTKGAL (207 aa)) is imidazoleglycerol-phosphate dehydratase.

It in the N-terminal section; belongs to the histidinol-phosphatase family. The protein in the C-terminal section; belongs to the imidazoleglycerol-phosphate dehydratase family. It depends on Mg(2+) as a cofactor.

It is found in the cytoplasm. It catalyses the reaction D-erythro-1-(imidazol-4-yl)glycerol 3-phosphate = 3-(imidazol-4-yl)-2-oxopropyl phosphate + H2O. The enzyme catalyses L-histidinol phosphate + H2O = L-histidinol + phosphate. The protein operates within amino-acid biosynthesis; L-histidine biosynthesis; L-histidine from 5-phospho-alpha-D-ribose 1-diphosphate: step 6/9. It functions in the pathway amino-acid biosynthesis; L-histidine biosynthesis; L-histidine from 5-phospho-alpha-D-ribose 1-diphosphate: step 8/9. The chain is Histidine biosynthesis bifunctional protein HisB from Xanthomonas campestris pv. campestris (strain 8004).